The sequence spans 295 residues: Hydroxylase/desaturase efuI (295 aa).

It belongs to the asaB hydroxylase/desaturase family.

The protein operates within secondary metabolite biosynthesis; terpenoid biosynthesis. Hydroxylase/desaturase; part of the gene cluster that mediates the biosynthesis of enfumafungin, a glycosylated fernene-type triterpenoid with potent antifungal activity, mediated by its interaction with beta-1,3-glucan synthase and the fungal cell wall. The pathway begins with the terpene cyclase-glycosyl transferase fusion protein that most likely uses 2,3-oxidosqualene as substrate and catalyzes glycosylation immediately after cyclization. The fernene glycoside then could be processed by the desaturase efuI which catalyzes isomerization of a double bond established by efuA to form the core structure. The latter would then undergo a series of hydroxylations in unknown order at C-2, C-19, C-23 and C-25, which would be catalyzed by two of the three cytochrome P450 monooxygenases efuB, efuG or efuH. The hydroxy-group at C-25 becomes oxidized by the dehydrogenase efuE to enable a spontaneous, non-enzymatic hemiacetal formation with C-23. After hydroxylation at C-2, acetylation by the acetyltransferase efuC takes place. The final steps in enfumafungin biosynthesis require expansion of the 5-membered ring by lactonization via a Baeyer-Villiger reaction mediated by one of the BGC's cytochrome P450 monooxygenases (efuB, efuG or efuH) followed by ring cleavage. This type of reaction would establish a double bond between C-20 and C-21 which could be reduced by the reductase efuL to form the final product. This chain is Hydroxylase/desaturase efuI, found in Hormonema carpetanum.